The sequence spans 174 residues: Isomerase prhC (174 aa).

It belongs to the trt14 isomerase family. As to quaternary structure, homodimer.

Its pathway is secondary metabolite biosynthesis; terpenoid biosynthesis. Functionally, isomerase; part of the gene cluster that mediates the biosynthesis of paraherquonin, a meroterpenoid with a unique, highly congested hexacyclic molecular architecture. The first step of the pathway is the synthesis of 3,5-dimethylorsellinic acid (DMOA) by the polyketide synthase prhL. Synthesis of DMOA is followed by farnesylation by the prenyltransferase prhE, methylesterification by the methyl-transferase prhM, epoxidation of the prenyl chain by the flavin-dependent monooxygenase prhF, and cyclization of the farnesyl moiety by the terpene cyclase prhH, to yield the tetracyclic intermediate, protoaustinoid A. The short chain dehydrogenase prhI then oxidizes the C-3 alcohol group of the terpene cyclase product to transform protoaustinoid A into protoaustinoid B. The FAD-binding monooxygenase prhJ catalyzes the oxidation of protoaustinoid B into preaustinoid A which is further oxidized into preaustinoid A1 by FAD-binding monooxygenase phrK. Finally, prhA leads to berkeleydione via the berkeleyone B intermediate. PrhA is a multifunctional dioxygenase that first desaturates at C5-C6 to form berkeleyone B, followed by rearrangement of the A/B-ring to form the cycloheptadiene moiety in berkeleydione. Berkeleydione serves as the key intermediate for the biosynthesis of paraherquonin as well as many other meroterpenoids. The cytochrome P450 monooxygenases prhB, prhD, and prhN, as well as the isomerase prhC, are probably involved in the late stage of paraherquonin biosynthesis, after the production of berkeleydione. Especially prhC might be a multifunctional enzyme that catalyzes the D-ring expansion via intramolecular methoxy rearrangement, as well as the hydrolysis of the expanded D-ring. The polypeptide is Isomerase prhC (Penicillium brasilianum).